The chain runs to 550 residues: MAAKDVKFGNDARIKMLRGVNILADAVKVTLGPKGRNVVLDKSFGSPTITKDGVSVAREIELEDKFENMGAQMVKEVASKANDAAGDGTTTATVLAQSIITEGLKAVAAGMNPMDLKRGIDKAVIAAVEELKKLSVPCSDSKAIAQVGTISANSDSTVGELIAQAMEKVGKEGVITVEEGSGLQDELDVVEGMQFDRGYLSPYFINKPETGSIELESPFILLADKKISNIREMLPVLEAVAKAGKPLLIIAEDVEGEALATLVVNTMRGIVKVAAVKAPGFGDRRKAMLQDIATLTAGTVISEEIGLELEKTTLEDLGQAKRVVINKDTTIIIDGVGDEAAIQGRVAQIRQQIEDATSDYDKEKLQERVAKLAGGVAVIKVGAATEVEMKEKKARVEDALHATRAAVEEGVVAGGGVALIRAASAITAAGLKGDNEDQNVGIKVALRAMESPLRQIVVNAGEEASVIANNVKAGSGSYGYNAYSEEYGDMIAMGILDPTKVTRSALQYAASIAGLMITTECMITDLPRDDKGADMGAGGMGGMGGMGGMM.

ATP-binding positions include 30 to 33, Lys-51, 87 to 91, Gly-415, and Asp-497; these read TLGP and DGTTT.

This sequence belongs to the chaperonin (HSP60) family. In terms of assembly, forms a cylinder of 14 subunits composed of two heptameric rings stacked back-to-back. Interacts with the co-chaperonin GroES.

Its subcellular location is the cytoplasm. It carries out the reaction ATP + H2O + a folded polypeptide = ADP + phosphate + an unfolded polypeptide.. Its function is as follows. Together with its co-chaperonin GroES, plays an essential role in assisting protein folding. The GroEL-GroES system forms a nano-cage that allows encapsulation of the non-native substrate proteins and provides a physical environment optimized to promote and accelerate protein folding. The sequence is that of Chaperonin GroEL from Yersinia enterocolitica serotype O:8 / biotype 1B (strain NCTC 13174 / 8081).